A 397-amino-acid polypeptide reads, in one-letter code: 1-deoxy-D-xylulose 5-phosphate reductoisomerase (397 aa).

Positions 12, 13, 14, 15, 38, 39, 40, and 126 each coordinate NADPH. Lysine 127 contacts 1-deoxy-D-xylulose 5-phosphate. Glutamate 128 is an NADPH binding site. Residue aspartate 152 participates in Mn(2+) binding. Residues serine 153, glutamate 154, serine 188, and histidine 211 each contribute to the 1-deoxy-D-xylulose 5-phosphate site. Residue glutamate 154 coordinates Mn(2+). NADPH is bound at residue glycine 217. Serine 224, asparagine 229, lysine 230, and glutamate 233 together coordinate 1-deoxy-D-xylulose 5-phosphate. Glutamate 233 lines the Mn(2+) pocket.

The protein belongs to the DXR family. It depends on Mg(2+) as a cofactor. The cofactor is Mn(2+).

The enzyme catalyses 2-C-methyl-D-erythritol 4-phosphate + NADP(+) = 1-deoxy-D-xylulose 5-phosphate + NADPH + H(+). The protein operates within isoprenoid biosynthesis; isopentenyl diphosphate biosynthesis via DXP pathway; isopentenyl diphosphate from 1-deoxy-D-xylulose 5-phosphate: step 1/6. Functionally, catalyzes the NADPH-dependent rearrangement and reduction of 1-deoxy-D-xylulose-5-phosphate (DXP) to 2-C-methyl-D-erythritol 4-phosphate (MEP). The protein is 1-deoxy-D-xylulose 5-phosphate reductoisomerase of Haemophilus influenzae (strain PittEE).